A 123-amino-acid chain; its full sequence is Large ribosomal subunit protein uL14 (123 aa).

This sequence belongs to the universal ribosomal protein uL14 family. In terms of assembly, part of the 50S ribosomal subunit. Forms a cluster with proteins L3 and L19. In the 70S ribosome, L14 and L19 interact and together make contacts with the 16S rRNA in bridges B5 and B8.

Binds to 23S rRNA. Forms part of two intersubunit bridges in the 70S ribosome. In Enterobacter sp. (strain 638), this protein is Large ribosomal subunit protein uL14.